Reading from the N-terminus, the 200-residue chain is ATP-dependent Clp protease proteolytic subunit 2 (200 aa).

S99 serves as the catalytic Nucleophile. H124 is an active-site residue.

This sequence belongs to the peptidase S14 family. As to quaternary structure, fourteen ClpP subunits assemble into 2 heptameric rings which stack back to back to give a disk-like structure with a central cavity, resembling the structure of eukaryotic proteasomes.

The protein resides in the cytoplasm. It catalyses the reaction Hydrolysis of proteins to small peptides in the presence of ATP and magnesium. alpha-casein is the usual test substrate. In the absence of ATP, only oligopeptides shorter than five residues are hydrolyzed (such as succinyl-Leu-Tyr-|-NHMec, and Leu-Tyr-Leu-|-Tyr-Trp, in which cleavage of the -Tyr-|-Leu- and -Tyr-|-Trp bonds also occurs).. Cleaves peptides in various proteins in a process that requires ATP hydrolysis. Has a chymotrypsin-like activity. Plays a major role in the degradation of misfolded proteins. The polypeptide is ATP-dependent Clp protease proteolytic subunit 2 (Treponema denticola (strain ATCC 35405 / DSM 14222 / CIP 103919 / JCM 8153 / KCTC 15104)).